The following is a 629-amino-acid chain: tRNA uridine 5-carboxymethylaminomethyl modification enzyme MnmG (629 aa).

13–18 (GGGHAG) contacts FAD. Residue 273-287 (GPRYCPSIEDKIHRF) coordinates NAD(+).

Belongs to the MnmG family. In terms of assembly, homodimer. Heterotetramer of two MnmE and two MnmG subunits. Requires FAD as cofactor.

The protein resides in the cytoplasm. Functionally, NAD-binding protein involved in the addition of a carboxymethylaminomethyl (cmnm) group at the wobble position (U34) of certain tRNAs, forming tRNA-cmnm(5)s(2)U34. This chain is tRNA uridine 5-carboxymethylaminomethyl modification enzyme MnmG, found in Shewanella baltica (strain OS155 / ATCC BAA-1091).